A 201-amino-acid chain; its full sequence is tRNA (guanine-N(7)-)-methyltransferase (201 aa).

The S-adenosyl-L-methionine site is built by Glu-33, Glu-58, Asp-85, and Asp-108. Residue Asp-108 is part of the active site. Lys-112 and Asp-144 together coordinate substrate.

Belongs to the class I-like SAM-binding methyltransferase superfamily. TrmB family.

It carries out the reaction guanosine(46) in tRNA + S-adenosyl-L-methionine = N(7)-methylguanosine(46) in tRNA + S-adenosyl-L-homocysteine. Its pathway is tRNA modification; N(7)-methylguanine-tRNA biosynthesis. Functionally, catalyzes the formation of N(7)-methylguanine at position 46 (m7G46) in tRNA. The chain is tRNA (guanine-N(7)-)-methyltransferase from Anaeromyxobacter dehalogenans (strain 2CP-C).